Reading from the N-terminus, the 279-residue chain is Type II iodothyronine deiodinase (279 aa).

At 1–7 (MGLLSAD) the chain is on the lumenal side. The chain crosses the membrane as a helical; Signal-anchor for type III membrane protein span at residues 8-28 (LLITLQILPVFFSNCLFLALY). The Cytoplasmic portion of the chain corresponds to 29-279 (DSVILLKHMV…TEDLSTDVSL (251 aa)). The active site involves selenocysteine 132. 2 non-standard amino acids (selenocysteine) are found at residues selenocysteine 132 and selenocysteine 265.

The protein belongs to the iodothyronine deiodinase family. As to quaternary structure, predominantly monomer. Can form homodimers but homodimerization is not essential for enzyme activity. As to expression, highly expressed in liver and in various parts of the brain including telencephalon, hippocampus, cerebellum, and brain stem, and weakly expressed in thyroid, lung, and small intestine. Not detected in skeletal muscle, heart atria or ventricle, gizzard or kidney.

It is found in the endoplasmic reticulum membrane. It catalyses the reaction 3,3',5-triiodo-L-thyronine + iodide + A + H(+) = L-thyroxine + AH2. The catalysed reaction is 3,3'-diiodo-L-thyronine + iodide + A + H(+) = 3,3',5'-triiodo-L-thyronine + AH2. The enzyme catalyses 3'-iodo-L-thyronine + iodide + A + H(+) = 3',5'-diiodo-L-thyronine + AH2. It carries out the reaction 3,3'-diiodothyronamine + iodide + A + H(+) = 3,3',5'-triiodothyronamine + AH2. It catalyses the reaction 3'-iodothyronamine + iodide + A + H(+) = 3',5'-diiodothyronamine + AH2. Not inhibited by N(6)-propylthiouracil. Functionally, plays a crucial role in the metabolism of thyroid hormones (TH) and has specific roles in TH activation and inactivation by deiodination. Catalyzes the deiodination of L-thyroxine (T4) to 3,5,3'-triiodothyronine (T3) and 3,3',5'-triiodothyronine (rT3) to 3,3'-diiodothyronine (3,3'-T2) via outer-ring deiodination (ORD). Catalyzes the deiodination of 3',5'-diiodothyronine (3',5'-T2) to 3'-monoiodothyronine (3'-T1) via ORD. Catalyzes the phenolic ring deiodinations of 3,3',5'-triiodothyronamine and 3',5'- diiodothyronamine. The sequence is that of Type II iodothyronine deiodinase (DIO2) from Gallus gallus (Chicken).